Here is a 230-residue protein sequence, read N- to C-terminus: Urease accessory protein UreG (230 aa).

33 to 40 serves as a coordination point for GTP; it reads GPVGSGKT.

This sequence belongs to the SIMIBI class G3E GTPase family. UreG subfamily. Homodimer. UreD, UreF and UreG form a complex that acts as a GTP-hydrolysis-dependent molecular chaperone, activating the urease apoprotein by helping to assemble the nickel containing metallocenter of UreC. The UreE protein probably delivers the nickel.

Its subcellular location is the cytoplasm. Its function is as follows. Facilitates the functional incorporation of the urease nickel metallocenter. This process requires GTP hydrolysis, probably effectuated by UreG. This chain is Urease accessory protein UreG, found in Mycobacteroides abscessus (strain ATCC 19977 / DSM 44196 / CCUG 20993 / CIP 104536 / JCM 13569 / NCTC 13031 / TMC 1543 / L948) (Mycobacterium abscessus).